We begin with the raw amino-acid sequence, 247 residues long: Putative methyltransferase GWCH70_2453 (247 aa).

The protein belongs to the methyltransferase superfamily.

Functionally, may be a S-adenosyl-L-methionine (SAM)-dependent methyltransferase. This Geobacillus sp. (strain WCH70) protein is Putative methyltransferase GWCH70_2453.